Consider the following 322-residue polypeptide: Ferrochelatase (322 aa).

His194 and Glu275 together coordinate Fe cation.

This sequence belongs to the ferrochelatase family.

It is found in the cytoplasm. The catalysed reaction is heme b + 2 H(+) = protoporphyrin IX + Fe(2+). It participates in porphyrin-containing compound metabolism; protoheme biosynthesis; protoheme from protoporphyrin-IX: step 1/1. In terms of biological role, catalyzes the ferrous insertion into protoporphyrin IX. In Yersinia enterocolitica, this protein is Ferrochelatase.